The chain runs to 603 residues: Polypeptide N-acetylgalactosaminyltransferase 9 (603 aa).

At 1 to 6 (MAVARK) the chain is on the cytoplasmic side. A helical; Signal-anchor for type II membrane protein transmembrane segment spans residues 7–29 (IRTLLTVNILVFVGIVLFSVYCR). Residues 30–603 (LQGRSQELVR…IRNWIKHARH (574 aa)) are Lumenal-facing. Disulfide bonds link cysteine 141-cysteine 372 and cysteine 363-cysteine 442. Residues 150-261 (LPQVSVVFIF…TGWAEPALSR (112 aa)) are catalytic subdomain A. Aspartate 191 and arginine 222 together coordinate substrate. Residues aspartate 245, histidine 247, and histidine 377 each coordinate Mn(2+). The catalytic subdomain B stretch occupies residues 318 to 380 (PIRTPAMIGC…PCSRVAHIER (63 aa)). 2 residues coordinate substrate: arginine 380 and tyrosine 385. The N-linked (GlcNAc...) asparagine glycan is linked to asparagine 460. Positions 464-600 (TYGEVRNSKA…KWMIRNWIKH (137 aa)) constitute a Ricin B-type lectin domain. Cystine bridges form between cysteine 477/cysteine 493, cysteine 525/cysteine 540, and cysteine 567/cysteine 587.

Belongs to the glycosyltransferase 2 family. GalNAc-T subfamily. Requires Mn(2+) as cofactor. Specifically expressed in brain. Not expressed in heart, placenta, lung, liver, skeletal muscle, kidney, pancreas, spleen, thymus, prostate, testis, ovary, small intestine, colon and leukocyte. In brain, it is expressed in cerebellum, frontal lobe, temporal lobe, putamen and spinal cord, weakly expressed in cerebral cortex. Not expressed in medulla and occipital pole.

It localises to the golgi apparatus membrane. The catalysed reaction is L-seryl-[protein] + UDP-N-acetyl-alpha-D-galactosamine = a 3-O-[N-acetyl-alpha-D-galactosaminyl]-L-seryl-[protein] + UDP + H(+). It carries out the reaction L-threonyl-[protein] + UDP-N-acetyl-alpha-D-galactosamine = a 3-O-[N-acetyl-alpha-D-galactosaminyl]-L-threonyl-[protein] + UDP + H(+). It participates in protein modification; protein glycosylation. Its function is as follows. Catalyzes the initial reaction in O-linked oligosaccharide biosynthesis, the transfer of an N-acetyl-D-galactosamine residue to a serine or threonine residue on the protein receptor. Does not glycosylate apomucin or SDC3. The chain is Polypeptide N-acetylgalactosaminyltransferase 9 (GALNT9) from Homo sapiens (Human).